Consider the following 503-residue polypeptide: Glutamate--tRNA ligase (503 aa).

Residues 12–22 (PSPTGYLHVGG) carry the 'HIGH' region motif. A 'KMSKS' region motif is present at residues 259–263 (KLSKR). Position 262 (K262) interacts with ATP.

It belongs to the class-I aminoacyl-tRNA synthetase family. Glutamate--tRNA ligase type 1 subfamily. Monomer.

The protein resides in the cytoplasm. It carries out the reaction tRNA(Glu) + L-glutamate + ATP = L-glutamyl-tRNA(Glu) + AMP + diphosphate. Its function is as follows. Catalyzes the attachment of glutamate to tRNA(Glu) in a two-step reaction: glutamate is first activated by ATP to form Glu-AMP and then transferred to the acceptor end of tRNA(Glu). The chain is Glutamate--tRNA ligase from Chloroherpeton thalassium (strain ATCC 35110 / GB-78).